A 212-amino-acid chain; its full sequence is Protein-L-isoaspartate O-methyltransferase (212 aa).

Ser-60 is an active-site residue.

It belongs to the methyltransferase superfamily. L-isoaspartyl/D-aspartyl protein methyltransferase family.

It localises to the cytoplasm. It carries out the reaction [protein]-L-isoaspartate + S-adenosyl-L-methionine = [protein]-L-isoaspartate alpha-methyl ester + S-adenosyl-L-homocysteine. In terms of biological role, catalyzes the methyl esterification of L-isoaspartyl residues in peptides and proteins that result from spontaneous decomposition of normal L-aspartyl and L-asparaginyl residues. It plays a role in the repair and/or degradation of damaged proteins. The protein is Protein-L-isoaspartate O-methyltransferase of Methanococcus maripaludis (strain C5 / ATCC BAA-1333).